The primary structure comprises 822 residues: MTEYNSEAYLKKLDKWWRAATYLGAGMIFLKENPLFSVTGTPIKAENLKANPIGHWGTVSGQTFLYAHANRLINKYDQKMFYMGGPGHGGQAMVVPSYLDGSYTEAYPEITQDLEGMSRLFKRFSFPGGIGSHMTAQTPGSLHEGGELGYVLSHATGAILDQPEQIAFAVVGDGEAETGPLMTSWHSIKFINPKNDGAILPILDLNGFKISNPTLFARTSDVDIRKFFEGLGYSPRYIENDDIHDYMAYHKLAAEVFDKAIEDIHQIQKDAREDNRYQNGEIPAWPIVIARLPKGWGGPRYNDWSGPKFDGKGMPIEHSFRAHQVPLPLSSKNMGTLPEFVKWMTSYQPETLFNADGSLKEELRDFAPKGEMRMASNPVTNGGVDSSNLVLPDWQEFANPISENNRGKLLPDTNDNMDMNVLSKYFAEIVKLNPTRFRLFGPDETMSNRFWEMFKVTNRQWMQVIKNPNDEFISPEGRIIDSQLSEHQAEGWLEGYTLTGRTGAFASYESFLRVVDSMLTQHFKWIRQAADQKWRHDYPSLNVISTSTVFQQDHNGYTHQDPGMLTHLAEKKSDFIRQYLPADGNTLLAVFDRAFQDRSKINHIVASKQPRQQWFTKEEAEKLATDGIATIDWASTAKDGEAVDLVFASAGAEPTIETLAALHLVNEVFPQAKFRYVNVVELGRLQKKKGALNQERELSDEEFEKYFGPSGTPVIFGFHGYEDLIESIFYQRGHDGLIVHGYREDGDITTTYDMRVYSELDRFHQAIDAMQVLYVNRKVNQGLAKAFIDRMKRTLVKHFEVTRNEGVDIPDFTEWVWSDLKK.

The protein belongs to the XFP family. Thiamine diphosphate serves as cofactor.

The sequence is that of Probable phosphoketolase from Lactococcus lactis subsp. lactis (strain IL1403) (Streptococcus lactis).